Consider the following 831-residue polypeptide: Periplasmic nitrate reductase (831 aa).

The tat-type signal signal peptide spans 1–29; the sequence is MTVTRRDFVRHQALATAAAAAGVAVPAAA. The 4Fe-4S Mo/W bis-MGD-type domain maps to 41–97; that stretch reads LVWSKAPCRFCGTGCSVNVATKEGRVVATHGDIKSPVNRGLNCVKGYFLSKVMYGED. Residues Cys48, Cys51, Cys55, and Cys83 each coordinate [4Fe-4S] cluster. Mo-bis(molybdopterin guanine dinucleotide) is bound by residues Lys85, Gln152, Asn177, Cys181, 214–221, 245–249, 264–266, Met375, Gln379, Asn485, 511–512, Lys534, Asp561, and 721–730; these read WGSNMAEM, STYEH, QSD, SD, and TGRVIEHWHS. Trp797 contributes to the substrate binding site. Mo-bis(molybdopterin guanine dinucleotide)-binding residues include Asn805 and Lys822.

This sequence belongs to the prokaryotic molybdopterin-containing oxidoreductase family. NasA/NapA/NarB subfamily. Component of the periplasmic nitrate reductase NapAB complex composed of NapA and NapB. The cofactor is [4Fe-4S] cluster. Requires Mo-bis(molybdopterin guanine dinucleotide) as cofactor. Post-translationally, predicted to be exported by the Tat system. The position of the signal peptide cleavage has not been experimentally proven.

The protein resides in the periplasm. The enzyme catalyses 2 Fe(II)-[cytochrome] + nitrate + 2 H(+) = 2 Fe(III)-[cytochrome] + nitrite + H2O. Catalytic subunit of the periplasmic nitrate reductase complex NapAB. Receives electrons from NapB and catalyzes the reduction of nitrate to nitrite. This chain is Periplasmic nitrate reductase, found in Saccharophagus degradans (strain 2-40 / ATCC 43961 / DSM 17024).